Reading from the N-terminus, the 111-residue chain is uncharacterized protein (111 aa).

This is an uncharacterized protein from Saccharomyces cerevisiae (strain ATCC 204508 / S288c) (Baker's yeast).